The chain runs to 156 residues: Ribosome maturation factor RimP (156 aa).

It belongs to the RimP family.

Its subcellular location is the cytoplasm. Its function is as follows. Required for maturation of 30S ribosomal subunits. This chain is Ribosome maturation factor RimP, found in Oenococcus oeni (strain ATCC BAA-331 / PSU-1).